A 270-amino-acid polypeptide reads, in one-letter code: Capsid maturation protease (270 aa).

Residues His89, Ser168, and Asp191 contribute to the active site.

In terms of processing, the self-cleavage of the C-terminus allows the activation of the protease.

The protein localises to the virion. Its function is as follows. Serine protease that is responsible for cleaving many of the prohead proteins during a major morphogenetic step in viral capsid maturation. Cleaves the major capsid protein at 7 [A,G,S]-X-E recognition sites. The sequence is that of Capsid maturation protease from Pseudomonas aeruginosa.